A 401-amino-acid chain; its full sequence is N-acetyllactosaminide beta-1,6-N-acetylglucosaminyl-transferase (401 aa).

Topologically, residues 1-7 (MPPSVRY) are cytoplasmic. A helical; Signal-anchor for type II membrane protein membrane pass occupies residues 8–28 (FFIVSVTTVIVFIVLYVLSFG). At 29–401 (GDQSYQKLNI…EIAIQPSWYF (373 aa)) the chain is on the lumenal side. Residues asparagine 37, asparagine 255, asparagine 315, and asparagine 389 are each glycosylated (N-linked (GlcNAc...) asparagine).

The protein belongs to the glycosyltransferase 14 family.

It is found in the golgi apparatus membrane. The catalysed reaction is a beta-D-Gal-(1-&gt;4)-beta-D-GlcNAc-(1-&gt;3)-beta-D-Gal-(1-&gt;4)-beta-D-GlcNAc derivative + UDP-N-acetyl-alpha-D-glucosamine = a beta-D-Gal-(1-&gt;4)-beta-D-GlcNAc-(1-&gt;3)-[beta-D-GlcNAc-(1-&gt;6)]-beta-D-Gal-(1-&gt;4)-N-acetyl-beta-D-glucosaminyl derivative + UDP + H(+). The protein operates within protein modification; protein glycosylation. Branching enzyme that converts linear into branched poly-N-acetyllactosaminoglycans. Introduces the blood group I antigen during embryonic development. It is closely associated with the development and maturation of erythroid cells. This Mus musculus (Mouse) protein is N-acetyllactosaminide beta-1,6-N-acetylglucosaminyl-transferase (Gcnt2).